We begin with the raw amino-acid sequence, 383 residues long: Arginine biosynthesis bifunctional protein ArgJ (383 aa).

Substrate is bound by residues threonine 146, lysine 168, threonine 179, glutamate 259, asparagine 378, and threonine 383. Threonine 179 functions as the Nucleophile in the catalytic mechanism.

Belongs to the ArgJ family. In terms of assembly, heterotetramer of two alpha and two beta chains.

It is found in the cytoplasm. The enzyme catalyses N(2)-acetyl-L-ornithine + L-glutamate = N-acetyl-L-glutamate + L-ornithine. It catalyses the reaction L-glutamate + acetyl-CoA = N-acetyl-L-glutamate + CoA + H(+). Its pathway is amino-acid biosynthesis; L-arginine biosynthesis; L-ornithine and N-acetyl-L-glutamate from L-glutamate and N(2)-acetyl-L-ornithine (cyclic): step 1/1. It participates in amino-acid biosynthesis; L-arginine biosynthesis; N(2)-acetyl-L-ornithine from L-glutamate: step 1/4. Its function is as follows. Catalyzes two activities which are involved in the cyclic version of arginine biosynthesis: the synthesis of N-acetylglutamate from glutamate and acetyl-CoA as the acetyl donor, and of ornithine by transacetylation between N(2)-acetylornithine and glutamate. In Thermobifida fusca (strain YX), this protein is Arginine biosynthesis bifunctional protein ArgJ.